A 557-amino-acid polypeptide reads, in one-letter code: Formate--tetrahydrofolate ligase (557 aa).

66-73 serves as a coordination point for ATP; it reads TPAGEGKS.

This sequence belongs to the formate--tetrahydrofolate ligase family.

The catalysed reaction is (6S)-5,6,7,8-tetrahydrofolate + formate + ATP = (6R)-10-formyltetrahydrofolate + ADP + phosphate. It functions in the pathway one-carbon metabolism; tetrahydrofolate interconversion. The polypeptide is Formate--tetrahydrofolate ligase (Clostridium botulinum (strain Kyoto / Type A2)).